The sequence spans 378 residues: Ecotin-like protein 3 (378 aa).

Disordered regions lie at residues 191–216 (HRLS…HAAP) and 238–378 (PQNN…KADP). A compositionally biased stretch (polar residues) spans 274-287 (NEPSPSRPRLSSTE). The segment covering 337-348 (RKAEDNVYEKTM) has biased composition (basic and acidic residues). Residues 362–378 (KASASSKKSGNGSKADP) are compositionally biased toward low complexity.

Belongs to the protease inhibitor I11 (ecotin) family.

This chain is Ecotin-like protein 3, found in Leishmania infantum.